The sequence spans 469 residues: Equisetin cluster transcription factor eqxR (469 aa).

A DNA-binding region (zn(2)-C6 fungal-type) is located at residues 13–47 (CDRCRSHKLKCTVAPENSRSGSNRCTRCIRAQVTC). Residues 58 to 84 (STNVKKADIKSGTNSQETTSMQASTIV) are disordered. Polar residues predominate over residues 68–82 (SGTNSQETTSMQAST).

It localises to the nucleus. Transcription factor that regulates the expression of the gene cluster that mediates the biosynthesis of Equisetin. This chain is Equisetin cluster transcription factor eqxR, found in Fusarium heterosporum.